The primary structure comprises 598 residues: MVGSIVGSNMAATDARFLSSNFGNSFSINTRIHRFHDRSQIVIPRAQSSSSPSPSPPSDKKKTKTRPGTITTKESEETVAKKLDVAPPSPQSPPSPPTLKLDDVNPVGLGRRSRQIFDEVWRKFSGLGQMSRTTRPDEQETLDSLLIREGPMCEFAVPGAQNVTVLVVGATSRIGRIVVRKLMLRGYTVKALVRKQDEEVMSMLPRSVDIVVGDVGEPSTLKSAVESCSKIIYCATARSTITADLTRVDHLGVYNLTKAFQDYNNRLAQLRAGKSSKSKLLLAKFKSAESLDGWEIRQGTYFQDTTASKYDGGMDAKFEFTETERAEFSGYVFTRGGYVELSKKLSLPLGTTLDRYEGLVLSVGGNGRSYVVILEAGPSSDMSQSKQYFARISTKAGFCRVRVPFSAFRPVNPEDPPLDPFLVHTLTIRFEPKRQRPVDGLAGAQQDLRSFSLVFEYIKALPAGQETDFILVSCTGSGVEANRREQVLKAKRAGEDSLRRSGLGYTIIRPGPLKEEPGGQRALIFDQGNRISQGISCADVADICVKALHDSTARNKSFDVCHEYVAEQGIELYELVAHLPDKANNYLTPALSVLEKNT.

The transit peptide at 1 to 79 directs the protein to the chloroplast; the sequence is MVGSIVGSNM…ITTKESEETV (79 aa). The interval 42-106 is disordered; sequence VIPRAQSSSS…PTLKLDDVNP (65 aa). Positions 73-84 are enriched in basic and acidic residues; that stretch reads KESEETVAKKLD. Positions 87–97 are enriched in pro residues; it reads PPSPQSPPSPP.

The protein belongs to the NmrA-type oxidoreductase family. In terms of assembly, component of a high molecular weight complex containing psbA mRNA, OHP1, OHP2 and HCF244, and PSII core proteins D1/D2, HCF136 and HCF173. Interacts with LPE1.

The protein localises to the plastid. Its subcellular location is the chloroplast membrane. It is found in the chloroplast thylakoid membrane. The protein resides in the chloroplast stroma. Auxiliary factor required, together with HCF244, for the biogenesis of photosystem II (PSII), especially for the synthesis of the reaction center proteins (e.g. D1), via the regulation of the corresponding mRNA (e.g. psbA) translation initiation (ribosomal loading) and stabilization. This is Protein HIGH CHLOROPHYLL FLUORESCENCE PHENOTYPE 173, chloroplastic from Arabidopsis thaliana (Mouse-ear cress).